Here is a 354-residue protein sequence, read N- to C-terminus: GTPase Obg (354 aa).

In terms of domain architecture, Obg spans 1 to 159 (MKFVDEVKIH…RDLVLELKLL (159 aa)). In terms of domain architecture, OBG-type G spans 160–333 (ADVGIVGYPN…LLDAVGRALF (174 aa)). GTP is bound by residues 166 to 173 (GYPNAGKS), 191 to 195 (FTTLT), 212 to 215 (DIPG), 283 to 286 (TKID), and 314 to 316 (SAV). Residues serine 173 and threonine 193 each coordinate Mg(2+).

This sequence belongs to the TRAFAC class OBG-HflX-like GTPase superfamily. OBG GTPase family. Monomer. It depends on Mg(2+) as a cofactor.

The protein localises to the cytoplasm. Its function is as follows. An essential GTPase which binds GTP, GDP and possibly (p)ppGpp with moderate affinity, with high nucleotide exchange rates and a fairly low GTP hydrolysis rate. Plays a role in control of the cell cycle, stress response, ribosome biogenesis and in those bacteria that undergo differentiation, in morphogenesis control. The chain is GTPase Obg from Anaeromyxobacter dehalogenans (strain 2CP-C).